A 266-amino-acid chain; its full sequence is Probable septum site-determining protein MinC (266 aa).

A disordered region spans residues 98 to 146; sequence ILKGGRPVSDVDVPKVEPESPPAEEKKKTGKATKASGKSDEIGETDSPQ. The segment covering 109–124 has biased composition (basic and acidic residues); the sequence is DVPKVEPESPPAEEKK.

This sequence belongs to the MinC family. In terms of assembly, interacts with MinD and FtsZ.

In terms of biological role, cell division inhibitor that blocks the formation of polar Z ring septums. Rapidly oscillates between the poles of the cell to destabilize FtsZ filaments that have formed before they mature into polar Z rings. Prevents FtsZ polymerization. In Allorhizobium ampelinum (strain ATCC BAA-846 / DSM 112012 / S4) (Agrobacterium vitis (strain S4)), this protein is Probable septum site-determining protein MinC.